The primary structure comprises 521 residues: MKTAHWADFYAEKIKKEKGPKNIYTVASGITPSGTVHIGNFREVISVDLVARALKDSGSQVRFIYSWDNYDVFRKVPKNMPEQELLTTYLRQAITRVPDTRGYKTSYARANEIEFEKYLPIVGINPEFIDQSKKYTNSTYASQIKFALNHKKELAEALNEYRTSKLEENWYPISIFCTKCNRDTTTVNNYDNHYSVKYSCECGNQESLDIRTTWAIKLPWRIDWPMRWKYEKVDFEPAGKDHHSSGGSFDTSKNIVKIFQGSPPVTFQYDFISIKGRGGKISSSLGDVISLKDVLEIYTPEVTRFLFAATKPNTEFSISFDLDVIKIYEDYDRFERIYYGVEDIKEEKKRSFKRIYELSQPYMPSKRIPYQIGFRHLSVICQIFENNINKILNYLKNVQDDQKDKLINKIKCVINWIKDFAPEDFKFLLRSKFDNIEILKEDNKKAISELLDSLKKNFEVATEQDIQNEIYKISRENNIEPALFFKQIYKILIDKEKGPKLAGFIKIIGIDRFEKIVSKYI.

The 'HIGH' region motif lies at 32 to 40 (PSGTVHIGN). A 'KMSKS' region motif is present at residues 280-284 (KISSS).

Belongs to the class-I aminoacyl-tRNA synthetase family.

The protein localises to the cytoplasm. The catalysed reaction is tRNA(Lys) + L-lysine + ATP = L-lysyl-tRNA(Lys) + AMP + diphosphate. This is Lysine--tRNA ligase from Borrelia garinii subsp. bavariensis (strain ATCC BAA-2496 / DSM 23469 / PBi) (Borreliella bavariensis).